The following is a 52-amino-acid chain: Inducible serine protease inhibitor 2 (52 aa).

Residues 5–52 (CTLPLETGICRAELHRFGYDTKLKECTQFVYGGCHHNENNFKKLEVCR) enclose the BPTI/Kunitz inhibitor domain. 2 cysteine pairs are disulfide-bonded: Cys14–Cys38 and Cys30–Cys51.

In terms of biological role, inhibits trypsin and the toxin protease PR2 of M.anisopliae. Does not inhibit chymotrypsin, subtilisin Carlsberg, proteinase K, porcine pancreatic elastase and the toxin protease PR1 of M.anisopliae. The polypeptide is Inducible serine protease inhibitor 2 (Galleria mellonella (Greater wax moth)).